A 226-amino-acid chain; its full sequence is Brain acid soluble protein 1 (226 aa).

The segment covering 1–11 (MGGKLSKKKKG) has biased composition (basic residues). The tract at residues 1–226 (MGGKLSKKKK…SSEQSVAVKE (226 aa)) is disordered. The N-myristoyl glycine moiety is linked to residue glycine 2. Basic and acidic residues predominate over residues 15 to 27 (NDEKAKDKDKKAE). Residue lysine 25 forms a Glycyl lysine isopeptide (Lys-Gly) (interchain with G-Cter in SUMO2) linkage. A phosphothreonine mark is found at threonine 31 and threonine 36. Serine 40 is subject to Phosphoserine. Residues 49 to 94 (TEVKESTEEKPKDAADGEAKAEEKEADKAAAAKEEAPKAEPEKSEG) show a composition bias toward basic and acidic residues. Residue lysine 86 forms a Glycyl lysine isopeptide (Lys-Gly) (interchain with G-Cter in SUMO2) linkage. Residues serine 92, serine 128, and serine 131 each carry the phosphoserine modification. Composition is skewed to low complexity over residues 106 to 140 (PEQEAAAPGPAAGGEAPKAGEASAESTGAADGAAP) and 150 to 226 (APAA…AVKE). Residue lysine 159 forms a Glycyl lysine isopeptide (Lys-Gly) (interchain with G-Cter in SUMO2) linkage. Residues serine 160, serine 167, serine 169, serine 173, serine 192, and serine 218 each carry the phosphoserine modification.

Belongs to the BASP1 family.

Its subcellular location is the cell membrane. It is found in the cell projection. The protein resides in the growth cone. This chain is Brain acid soluble protein 1 (Basp1), found in Mus musculus (Mouse).